The chain runs to 575 residues: Arginine--tRNA ligase (575 aa).

Positions 131–141 (ANPTGPLHVGH) match the 'HIGH' region motif.

Belongs to the class-I aminoacyl-tRNA synthetase family. Monomer.

It is found in the cytoplasm. It catalyses the reaction tRNA(Arg) + L-arginine + ATP = L-arginyl-tRNA(Arg) + AMP + diphosphate. The sequence is that of Arginine--tRNA ligase from Jannaschia sp. (strain CCS1).